A 433-amino-acid polypeptide reads, in one-letter code: 3-phosphoshikimate 1-carboxyvinyltransferase (433 aa).

3 residues coordinate 3-phosphoshikimate: Lys-15, Ser-16, and Arg-20. A phosphoenolpyruvate-binding site is contributed by Lys-15. Residues Gly-96 and Arg-124 each contribute to the phosphoenolpyruvate site. Positions 169, 171, 318, and 345 each coordinate 3-phosphoshikimate. Gln-171 serves as a coordination point for phosphoenolpyruvate. The active-site Proton acceptor is the Asp-318. Residues Arg-349 and Arg-393 each contribute to the phosphoenolpyruvate site.

The protein belongs to the EPSP synthase family. As to quaternary structure, monomer.

It is found in the cytoplasm. The catalysed reaction is 3-phosphoshikimate + phosphoenolpyruvate = 5-O-(1-carboxyvinyl)-3-phosphoshikimate + phosphate. The protein operates within metabolic intermediate biosynthesis; chorismate biosynthesis; chorismate from D-erythrose 4-phosphate and phosphoenolpyruvate: step 6/7. Catalyzes the transfer of the enolpyruvyl moiety of phosphoenolpyruvate (PEP) to the 5-hydroxyl of shikimate-3-phosphate (S3P) to produce enolpyruvyl shikimate-3-phosphate and inorganic phosphate. The protein is 3-phosphoshikimate 1-carboxyvinyltransferase of Chlorobium phaeovibrioides (strain DSM 265 / 1930) (Prosthecochloris vibrioformis (strain DSM 265)).